A 323-amino-acid polypeptide reads, in one-letter code: Glucokinase (323 aa).

8–13 (GDVGGT) is an ATP binding site.

The protein belongs to the bacterial glucokinase family.

The protein localises to the cytoplasm. It carries out the reaction D-glucose + ATP = D-glucose 6-phosphate + ADP + H(+). The polypeptide is Glucokinase (Yersinia pseudotuberculosis serotype I (strain IP32953)).